A 252-amino-acid chain; its full sequence is 3-dehydroquinate dehydratase (252 aa).

3-dehydroquinate contacts are provided by residues Ser21, 46-48, and Arg82; that span reads EWR. The active-site Proton donor/acceptor is the His143. Lys170 serves as the catalytic Schiff-base intermediate with substrate. Positions 213, 232, and 236 each coordinate 3-dehydroquinate.

This sequence belongs to the type-I 3-dehydroquinase family. As to quaternary structure, homodimer.

The enzyme catalyses 3-dehydroquinate = 3-dehydroshikimate + H2O. Its pathway is metabolic intermediate biosynthesis; chorismate biosynthesis; chorismate from D-erythrose 4-phosphate and phosphoenolpyruvate: step 3/7. Involved in the third step of the chorismate pathway, which leads to the biosynthesis of aromatic amino acids. Catalyzes the cis-dehydration of 3-dehydroquinate (DHQ) and introduces the first double bond of the aromatic ring to yield 3-dehydroshikimate. The polypeptide is 3-dehydroquinate dehydratase (Escherichia coli O139:H28 (strain E24377A / ETEC)).